The sequence spans 272 residues: Regulatory protein RecX (272 aa).

It belongs to the RecX family.

It localises to the cytoplasm. Its function is as follows. Modulates RecA activity. This chain is Regulatory protein RecX, found in Staphylococcus saprophyticus subsp. saprophyticus (strain ATCC 15305 / DSM 20229 / NCIMB 8711 / NCTC 7292 / S-41).